The chain runs to 255 residues: Ribosomal RNA large subunit methyltransferase E (255 aa).

Residues glycine 50, tryptophan 52, aspartate 68, aspartate 84, and aspartate 108 each contribute to the S-adenosyl-L-methionine site. Lysine 148 acts as the Proton acceptor in catalysis. Positions 195–253 (PVRSGEIYDVTVDSVGRTGDGIAMIQGFAVIVKNASPGERLRIKIGPVKQRFAFASILE) constitute a TRAM domain.

The protein belongs to the class I-like SAM-binding methyltransferase superfamily. RNA methyltransferase RlmE family.

It is found in the cytoplasm. It carries out the reaction uridine(2552) in 23S rRNA + S-adenosyl-L-methionine = 2'-O-methyluridine(2552) in 23S rRNA + S-adenosyl-L-homocysteine + H(+). In terms of biological role, specifically methylates the uridine in position 2552 of 23S rRNA at the 2'-O position of the ribose in the fully assembled 50S ribosomal subunit. In Methanothrix thermoacetophila (strain DSM 6194 / JCM 14653 / NBRC 101360 / PT) (Methanosaeta thermophila), this protein is Ribosomal RNA large subunit methyltransferase E.